A 1044-amino-acid chain; its full sequence is Isoleucine--tRNA ligase (1044 aa).

The 'HIGH' region motif lies at 48-58; the sequence is PFATGLPHFGH. The 'KMSKS' region motif lies at 594 to 598; it reads KMSKS. Lysine 597 provides a ligand contact to ATP.

It belongs to the class-I aminoacyl-tRNA synthetase family. IleS type 2 subfamily. In terms of assembly, monomer. The cofactor is Zn(2+).

Its subcellular location is the cytoplasm. It carries out the reaction tRNA(Ile) + L-isoleucine + ATP = L-isoleucyl-tRNA(Ile) + AMP + diphosphate. Catalyzes the attachment of isoleucine to tRNA(Ile). As IleRS can inadvertently accommodate and process structurally similar amino acids such as valine, to avoid such errors it has two additional distinct tRNA(Ile)-dependent editing activities. One activity is designated as 'pretransfer' editing and involves the hydrolysis of activated Val-AMP. The other activity is designated 'posttransfer' editing and involves deacylation of mischarged Val-tRNA(Ile). This is Isoleucine--tRNA ligase from Borrelia duttonii (strain Ly).